Reading from the N-terminus, the 746-residue chain is Polyphosphate kinase (746 aa).

Residues 1-17 are compositionally biased toward polar residues; it reads MRQPNTQAEAQHTQPSV. Residues 1 to 60 are disordered; it reads MRQPNTQAEAQHTQPSVGSIAAHRPNTVAATVSGLEPDIDADLDAYEESEESQDGGARLP. Over residues 37-53 the composition is skewed to acidic residues; it reads PDIDADLDAYEESEESQ. Asn102 is an ATP binding site. Arg429 and Arg459 together coordinate Mg(2+). The Phosphohistidine intermediate role is filled by His489. ATP-binding residues include Tyr522, Arg618, and His646.

The protein belongs to the polyphosphate kinase 1 (PPK1) family. Mg(2+) is required as a cofactor. Post-translationally, an intermediate of this reaction is the autophosphorylated ppk in which a phosphate is covalently linked to a histidine residue through a N-P bond.

It carries out the reaction [phosphate](n) + ATP = [phosphate](n+1) + ADP. Its function is as follows. Catalyzes the reversible transfer of the terminal phosphate of ATP to form a long-chain polyphosphate (polyP). The chain is Polyphosphate kinase from Streptomyces coelicolor (strain ATCC BAA-471 / A3(2) / M145).